The chain runs to 239 residues: Putative transcriptional regulator of 2-aminoethylphosphonate degradation operons (239 aa).

The HTH gntR-type domain maps to 8–76 (IPQYLLIKAQ…DRRGWFVTPE (69 aa)). The segment at residues 36-55 (ERELCAIFNTTRITIRESLA) is a DNA-binding region (H-T-H motif).

The sequence is that of Putative transcriptional regulator of 2-aminoethylphosphonate degradation operons (phnR) from Salmonella typhi.